A 689-amino-acid polypeptide reads, in one-letter code: Beta-adrenergic receptor kinase 1 (689 aa).

The interval M1–D190 is N-terminal. The RGS domain maps to T54–C175. Residues F191–F453 enclose the Protein kinase domain. ATP is bound by residues I197 to V205 and K220. The active-site Proton acceptor is D317. One can recognise an AGC-kinase C-terminal domain in the interval R454–V521. One can recognise a PH domain in the interval D558–R652. S670 is subject to Phosphoserine.

This sequence belongs to the protein kinase superfamily. AGC Ser/Thr protein kinase family. GPRK subfamily. As to quaternary structure, interacts with the heterodimer formed by GNB1 and GNG2. Interacts with GIT1. Interacts with, and phosphorylates chemokine-stimulated CCR5. Interacts with ARRB1. Interacts with LPAR1 and LPAR2. Interacts with RALA in response to LPAR1 activation. ADRBK1 and RALA mutually inhibit each other's binding to LPAR1. Interacts with ADRB2. Expressed at low levels in brain cortex, hippocampus, striatum, hypothalamus, cerebellum and brainstem (at protein level).

The protein localises to the cytoplasm. Its subcellular location is the cell membrane. It localises to the postsynapse. It is found in the presynapse. It carries out the reaction [beta-adrenergic receptor] + ATP = [beta-adrenergic receptor]-phosphate + ADP + H(+). In contrast to other AGC family kinases, the catalytic activity is solely regulated by the binding of substrates and ligands, not by phosphorylation of the kinase domain. Its function is as follows. Specifically phosphorylates the agonist-occupied form of the beta-adrenergic and closely related receptors, probably inducing a desensitization of them. Key regulator of LPAR1 signaling. Competes with RALA for binding to LPAR1 thus affecting the signaling properties of the receptor. Desensitizes LPAR1 and LPAR2 in a phosphorylation-independent manner. Positively regulates ciliary smoothened (SMO)-dependent Hedgehog (Hh) signaling pathway by facilitating the trafficking of SMO into the cilium and the stimulation of SMO activity. Inhibits relaxation of airway smooth muscle in response to blue light. The polypeptide is Beta-adrenergic receptor kinase 1 (Rattus norvegicus (Rat)).